Reading from the N-terminus, the 122-residue chain is Large ribosomal subunit protein uL14 (122 aa).

Belongs to the universal ribosomal protein uL14 family. In terms of assembly, part of the 50S ribosomal subunit. Forms a cluster with proteins L3 and L19. In the 70S ribosome, L14 and L19 interact and together make contacts with the 16S rRNA in bridges B5 and B8.

In terms of biological role, binds to 23S rRNA. Forms part of two intersubunit bridges in the 70S ribosome. This Staphylococcus haemolyticus (strain JCSC1435) protein is Large ribosomal subunit protein uL14.